We begin with the raw amino-acid sequence, 279 residues long: Diaminopimelate epimerase (279 aa).

The substrate site is built by Asn11 and Asn72. Cys81 (proton donor) is an active-site residue. Substrate is bound by residues 82-83, Asn187, and 205-206; these read GN and ER. The Proton acceptor role is filled by Cys215. 216–217 serves as a coordination point for substrate; that stretch reads GT.

It belongs to the diaminopimelate epimerase family. Homodimer.

It localises to the cytoplasm. The catalysed reaction is (2S,6S)-2,6-diaminopimelate = meso-2,6-diaminopimelate. The protein operates within amino-acid biosynthesis; L-lysine biosynthesis via DAP pathway; DL-2,6-diaminopimelate from LL-2,6-diaminopimelate: step 1/1. Functionally, catalyzes the stereoinversion of LL-2,6-diaminopimelate (L,L-DAP) to meso-diaminopimelate (meso-DAP), a precursor of L-lysine and an essential component of the bacterial peptidoglycan. This Aquifex aeolicus (strain VF5) protein is Diaminopimelate epimerase.